Reading from the N-terminus, the 194-residue chain is Holliday junction branch migration complex subunit RuvA (194 aa).

Residues 1–64 (MIAYIQGSIT…QDAHTLYGFS (64 aa)) are domain I. The domain II stretch occupies residues 65–143 (TIEEKQCFLQ…KVGNMLSLQP (79 aa)). The segment at 144 to 150 (SGQEAIY) is flexible linker. The segment at 150 to 194 (YQEALAALSKLGIHKSTAEKTVAAILKEHQGEITVESLIKLALKG) is domain III.

The protein belongs to the RuvA family. As to quaternary structure, homotetramer. Forms an RuvA(8)-RuvB(12)-Holliday junction (HJ) complex. HJ DNA is sandwiched between 2 RuvA tetramers; dsDNA enters through RuvA and exits via RuvB. An RuvB hexamer assembles on each DNA strand where it exits the tetramer. Each RuvB hexamer is contacted by two RuvA subunits (via domain III) on 2 adjacent RuvB subunits; this complex drives branch migration. In the full resolvosome a probable DNA-RuvA(4)-RuvB(12)-RuvC(2) complex forms which resolves the HJ.

The protein resides in the cytoplasm. The RuvA-RuvB-RuvC complex processes Holliday junction (HJ) DNA during genetic recombination and DNA repair, while the RuvA-RuvB complex plays an important role in the rescue of blocked DNA replication forks via replication fork reversal (RFR). RuvA specifically binds to HJ cruciform DNA, conferring on it an open structure. The RuvB hexamer acts as an ATP-dependent pump, pulling dsDNA into and through the RuvAB complex. HJ branch migration allows RuvC to scan DNA until it finds its consensus sequence, where it cleaves and resolves the cruciform DNA. This Amoebophilus asiaticus (strain 5a2) protein is Holliday junction branch migration complex subunit RuvA.